A 259-amino-acid polypeptide reads, in one-letter code: MIKQIGRFFRAFIFIMPLSLTSCESKIDRNRIWIVGTNATYPPFEYVDAQGEVVGFDIDLAKAISEKLGKQLEVREFAFDALILNLKKHRIDAILAGMSITPSRQKEIALLPYYGDEVQELMVVSKRSLETPVLPLTQYSSVAVQTGTFQEHYLLSQPGICVRSFDSTLEVIMEVRYGKSPVAVLEPSVGRVVLKDFPNLVATRLELPPECWVLGCGLGVAKDRPEEIQTIQQAITDLKSEGVIQSLTKKWQLSEVAYE.

Residues 1–25 (MIKQIGRFFRAFIFIMPLSLTSCES) form the signal peptide. L-arginine-binding residues include N38, E45, A96, G97, S99, R104, and F149.

Belongs to the bacterial solute-binding protein 3 family.

The protein localises to the secreted. The protein resides in the cell surface. Probably part of an ABC transporter complex involved in arginine transport. Binds arginine. Interacts with host epithelial cells, suggesting a role in host-cell adhesion during infection. The chain is Probable ABC transporter arginine-binding protein ArtJ from Chlamydia pneumoniae (Chlamydophila pneumoniae).